The primary structure comprises 357 residues: Histidine biosynthesis bifunctional protein HisB (357 aa).

The segment at 1 to 167 (MNDKILFIDR…IHKYLMQNSH (167 aa)) is histidinol-phosphatase. Asp-9 functions as the Nucleophile in the catalytic mechanism. 2 residues coordinate Mg(2+): Asp-9 and Asp-11. The Proton donor role is filled by Asp-11. Positions 93, 95, 101, and 103 each coordinate Zn(2+). Position 130 (Asp-130) interacts with Mg(2+). Positions 168–357 (RVAHIQRITN…QIPSSKGILL (190 aa)) are imidazoleglycerol-phosphate dehydratase.

This sequence in the N-terminal section; belongs to the histidinol-phosphatase family. In the C-terminal section; belongs to the imidazoleglycerol-phosphate dehydratase family. The cofactor is Mg(2+). Zn(2+) is required as a cofactor.

It is found in the cytoplasm. It catalyses the reaction D-erythro-1-(imidazol-4-yl)glycerol 3-phosphate = 3-(imidazol-4-yl)-2-oxopropyl phosphate + H2O. The enzyme catalyses L-histidinol phosphate + H2O = L-histidinol + phosphate. Its pathway is amino-acid biosynthesis; L-histidine biosynthesis; L-histidine from 5-phospho-alpha-D-ribose 1-diphosphate: step 6/9. It functions in the pathway amino-acid biosynthesis; L-histidine biosynthesis; L-histidine from 5-phospho-alpha-D-ribose 1-diphosphate: step 8/9. This is Histidine biosynthesis bifunctional protein HisB from Blochmanniella floridana.